The following is a 517-amino-acid chain: L-amino-acid oxidase (517 aa).

The signal sequence occupies residues 1 to 18 (MNVFFMFSLLFLAALESC). A disulfide bond links Cys-29 and Cys-192. Residues 62-63 (MA), 82-83 (EA), Arg-90, and 106-109 (GPMR) contribute to the FAD site. Arg-109 contacts substrate. Asn-191 carries N-linked (GlcNAc...) asparagine glycosylation. Residue Val-280 participates in FAD binding. Cys-350 and Cys-431 form a disulfide bridge. Asn-380 is a glycosylation site (N-linked (GlcNAc...) asparagine). Residue Tyr-391 participates in substrate binding. Residues Glu-476 and 483–488 (GWLDST) contribute to the FAD site. 483–484 (GW) is a binding site for substrate.

It belongs to the flavin monoamine oxidase family. FIG1 subfamily. As to quaternary structure, homodimer; non-covalently linked. FAD serves as cofactor. In terms of processing, N-glycosylated. In terms of tissue distribution, expressed by the venom gland.

The protein localises to the secreted. It catalyses the reaction an L-alpha-amino acid + O2 + H2O = a 2-oxocarboxylate + H2O2 + NH4(+). Catalyzes an oxidative deamination of predominantly hydrophobic and aromatic L-amino acids, thus producing hydrogen peroxide that may contribute to the diverse toxic effects of this enzyme. Exhibits diverse biological activities, such as hemorrhage, hemolysis, edema, apoptosis of vascular endothelial cells or tumor cell lines, antibacterial and antiparasitic activities, as well as regulation of platelet aggregation. Effects of snake L-amino oxidases on platelets are controversial, since they either induce aggregation or inhibit agonist-induced aggregation. These different effects are probably due to different experimental conditions. The sequence is that of L-amino-acid oxidase from Notechis scutatus scutatus (Mainland tiger snake).